Reading from the N-terminus, the 137-residue chain is Endoribonuclease YbeY (137 aa).

Zn(2+)-binding residues include H103, H107, and H113.

The protein belongs to the endoribonuclease YbeY family. Zn(2+) is required as a cofactor.

The protein localises to the cytoplasm. Functionally, single strand-specific metallo-endoribonuclease involved in late-stage 70S ribosome quality control and in maturation of the 3' terminus of the 16S rRNA. The polypeptide is Endoribonuclease YbeY (Acholeplasma laidlawii (strain PG-8A)).